A 282-amino-acid polypeptide reads, in one-letter code: NADPH-dependent 7-cyano-7-deazaguanine reductase (282 aa).

88 to 90 is a substrate binding site; sequence IES. 90 to 91 provides a ligand contact to NADPH; it reads SK. Cys-190 functions as the Thioimide intermediate in the catalytic mechanism. The Proton donor role is filled by Asp-197. 229 to 230 serves as a coordination point for substrate; that stretch reads HE. An NADPH-binding site is contributed by 258-259; that stretch reads RG.

It belongs to the GTP cyclohydrolase I family. QueF type 2 subfamily. In terms of assembly, homodimer.

It localises to the cytoplasm. It carries out the reaction 7-aminomethyl-7-carbaguanine + 2 NADP(+) = 7-cyano-7-deazaguanine + 2 NADPH + 3 H(+). It functions in the pathway tRNA modification; tRNA-queuosine biosynthesis. In terms of biological role, catalyzes the NADPH-dependent reduction of 7-cyano-7-deazaguanine (preQ0) to 7-aminomethyl-7-deazaguanine (preQ1). This chain is NADPH-dependent 7-cyano-7-deazaguanine reductase, found in Salmonella heidelberg (strain SL476).